A 105-amino-acid chain; its full sequence is Delta-hexatoxin-Mg1a (105 aa).

The signal sequence occupies residues 1 to 18 (MKTLVIACVALVLVVVHG). Residues 19 to 60 (EVIEEVNEKQLQESVEEKYSLLQRLEKLDEAITAEENRNSRV) constitute a propeptide that is removed on maturation. 4 disulfides stabilise this stretch: Cys63–Cys77, Cys70–Cys82, Cys76–Cys93, and Cys78–Cys105.

Belongs to the neurotoxin 06 (delta-actx) family. As to expression, expressed by the venom gland.

Its subcellular location is the secreted. Functionally, selectively slows channel inactivation of mammalian Nav1.1/SCN1A, Nav1.3/SCN3A, and Nav1.6/SCN8A and shows higher affinity for insect Nav1/para channels (site 3). Induces tonic repetitive firing of nerve impulses in insect neurons accompanied by plateau potentials. This is Delta-hexatoxin-Mg1a from Macrothele gigas (Japanese funnel web spider).